An 81-amino-acid polypeptide reads, in one-letter code: Protein Vpu (81 aa).

Residues 1–7 lie on the Extracellular side of the membrane; sequence MQPSQII. The helical transmembrane segment at 8–28 threads the bilayer; it reads AIAALVVAAIIAIVVWTIVFI. Residues 29–81 are Cytoplasmic-facing; the sequence is EYRRIKRQRKIDCIIDRIRERAEDSGNESEGDREELSKLVEMGHHAPWDIDDL. 2 positions are modified to phosphoserine; by host CK2: S53 and S57.

The protein belongs to the HIV-1 VPU protein family. In terms of assembly, homopentamer. Interacts with host CD4 and BRTC; these interactions induce proteasomal degradation of CD4. Interacts with host BST2; this interaction leads to the degradation of host BST2. Interacts with host FBXW11. Interacts with host AP1M1; this interaction plays a role in the mistrafficking and subsequent degradation of host BST2. Interacts with host RANBP2; this interaction allows Vpu to down-regulate host BLM sumoylation. Post-translationally, phosphorylated by host CK2. This phosphorylation is necessary for interaction with human BTRC and degradation of CD4.

It is found in the host membrane. Its activity is regulated as follows. Ion channel activity is inhibited by hexamethylene amiloride in vitro. Functionally, enhances virion budding by targeting host CD4 and Tetherin/BST2 to proteasome degradation. Degradation of CD4 prevents any unwanted premature interactions between viral Env and its host receptor CD4 in the endoplasmic reticulum. Degradation of antiretroviral protein Tetherin/BST2 is important for virion budding, as BST2 tethers new viral particles to the host cell membrane. Mechanistically, Vpu bridges either CD4 or BST2 to BTRC, a substrate recognition subunit of the Skp1/Cullin/F-box protein E3 ubiquitin ligase, induces their ubiquitination and subsequent proteasomal degradation. The alteration of the E3 ligase specificity by Vpu seems to promote the degradation of host IKBKB, leading to NF-kappa-B down-regulation and subsequent apoptosis. Acts as a viroporin that forms an oligomeric ion channel in membranes. Modulates the host DNA repair mechanisms to promote degradation of nuclear viral cDNA in cells that are already productively infected in order to suppress immune sensing and proviral hyper-integration (superinfection). Manipulates PML-NBs and modulates SUMOylation of host BLM protein thereby enhancing its DNA-end processing activity toward viral unintegrated linear DNA. Also inhibits RAD52-mediated homologous repair of viral cDNA, preventing the generation of dead-end circular forms of single copies of the long terminal repeat and permitting sustained nucleolytic attack. The protein is Protein Vpu of Homo sapiens (Human).